Reading from the N-terminus, the 256-residue chain is MAAAVGRLLRASVARGVSAIPWGISATAALRPAACGRTSLTNLLCSGSSQAKLFSTSSSYHAPAVTQHAPYFKGTAVVNGEFKDLSLDDFKGKYLVLFFYPLDFTFVCPTEIVAFSDKANEFHDVNCEVVAVSVDSHFSHLAWINTPRKNGGLGHMNIALLSDLTKQISRDYGVLLEGSGLALRGLFIIDPNGVIKHLSVNDLPVGRSVEETLRLVKAFQYVETHGEVCPANWTPDSPTIKPNPAASKEYFQKVNQ.

The transit peptide at 1 to 61 (MAAAVGRLLR…KLFSTSSSYH (61 aa)) directs the protein to the mitochondrion. In terms of domain architecture, Thioredoxin spans 63–221 (PAVTQHAPYF…TLRLVKAFQY (159 aa)). Lys-83 is subject to N6-succinyllysine. At Lys-91 the chain carries N6-acetyllysine; alternate. N6-succinyllysine; alternate is present on Lys-91. Residue Cys-108 is the Cysteine sulfenic acid (-SOH) intermediate of the active site. At Thr-146 the chain carries Phosphothreonine.

The protein belongs to the peroxiredoxin family. AhpC/Prx1 subfamily. As to quaternary structure, homodimer; disulfide-linked, upon oxidation. 6 homodimers assemble to form a ring-like dodecamer. Interacts with NEK6. Interacts with LRRK2. Interacts with MAP3K13. Interacts with RPS6KC1 (via PX domain). In terms of processing, phosphorylated by LRRK2; phosphorylation reduces perodixase activity. Post-translationally, the enzyme can be inactivated by further oxidation of the cysteine sulfenic acid (C(P)-SOH) to sulphinic acid (C(P)-SO2H) and sulphonic acid (C(P)-SO3H) instead of its condensation to a disulfide bond. S-palmitoylated.

The protein localises to the mitochondrion. The protein resides in the cytoplasm. Its subcellular location is the early endosome. The enzyme catalyses a hydroperoxide + [thioredoxin]-dithiol = an alcohol + [thioredoxin]-disulfide + H2O. Thiol-specific peroxidase that catalyzes the reduction of hydrogen peroxide and organic hydroperoxides to water and alcohols, respectively. Plays a role in cell protection against oxidative stress by detoxifying peroxides. Acts synergistically with MAP3K13 to regulate the activation of NF-kappa-B in the cytosol. Required for the maintenance of physical strength. The chain is Thioredoxin-dependent peroxide reductase, mitochondrial (PRDX3) from Pongo abelii (Sumatran orangutan).